Here is a 3013-residue protein sequence, read N- to C-terminus: Genome polyprotein (3013 aa).

Ser2 is subject to N-acetylserine; by host. The interval 2 to 23 (STLPKPQKRNQRNTNRRPQDVK) is interaction with STAT1. The interval 2-58 (STLPKPQKRNQRNTNRRPQDVKFPGGGQIVGGVYLLPRRGPRLGVRATRKTSERSQP) is interaction with EIF2AK2/PKR. The interval 2 to 59 (STLPKPQKRNQRNTNRRPQDVKFPGGGQIVGGVYLLPRRGPRLGVRATRKTSERSQPR) is interaction with DDX3X. The disordered stretch occupies residues 2–75 (STLPKPQKRN…PKARRQTGRT (74 aa)). Topologically, residues 2-168 (STLPKPQKRN…EDGINYATGN (167 aa)) are cytoplasmic. Short sequence motifs (nuclear localization signal) lie at residues 5 to 13 (PKPQKRNQR) and 38 to 43 (PRRGPR). A compositionally biased stretch (basic residues) spans 7 to 16 (PQKRNQRNTN). Over residues 32–47 (GGVYLLPRRGPRLGVR) the composition is skewed to low complexity. At Ser53 the chain carries Phosphoserine; by host. 2 consecutive short sequence motifs (nuclear localization signal) follow at residues 58-64 (PRGRRQP) and 66-71 (PKARRQ). Residues 58-72 (PRGRRQPIPKARRQT) show a composition bias toward basic residues. A phosphoserine; by host mark is found at Ser99 and Ser116. Residues 112 to 152 (PRRRSRNLGKVIDTLTCGFADLMGYIPVVGAPLGGVAAALA) are important for endoplasmic reticulum and mitochondrial localization. An interaction with APOA2 region spans residues 122 to 173 (VIDTLTCGFADLMGYIPVVGAPLGGVAAALAHGVRAVEDGINYATGNLPGCS). Residues 164-167 (YATG) form an important for lipid droplets localization region. The helical transmembrane segment at 169–189 (LPGCSFSIFLLALLSCLTTPA) threads the bilayer. Positions 178–191 (LLALLSCLTTPASA) are cleaved as a propeptide — ER anchor for the core protein, removed in mature form by host signal peptidase. Residues 190-358 (SAVHYANKSG…TGGHWGILAG (169 aa)) lie on the Lumenal side of the membrane. N-linked (GlcNAc...) asparagine; by host glycosylation is found at Asn196, Asn209, Asn234, and Asn250. Positions 265-296 (MVGAAAFCSAMYVGDLCGGIFLVGQLFSFNPR) are important for fusion. N-linked (GlcNAc...) asparagine; by host glycosylation occurs at Asn305. A helical membrane pass occupies residues 359 to 379 (ILYYSMVANWAKVLCILFLFA). Topologically, residues 380-723 (GVDATTRTTG…WEYVVLAFLL (344 aa)) are lumenal. Positions 385 to 412 (TRTTGAQAARATLGFTGLFQTGAKQNIH) are HVR1. N-linked (GlcNAc...) (high mannose) asparagine; by host glycosylation is found at Asn417, Asn423, and Asn430. 4 disulfides stabilise this stretch: Cys429/Cys553, Cys452/Cys459, Cys487/Cys495, and Cys504/Cys509. Residue Asn448 is glycosylated (N-linked (GlcNAc...) asparagine; by host). Residues 475-479 (ANVSG) are HVR2. The N-linked (GlcNAc...) asparagine; by host glycan is linked to Asn476. The interval 481–494 (SEDRPYCWHYAPRP) is CD81-binding 1. Asn533 carries an N-linked (GlcNAc...) asparagine; by host glycan. Positions 545–552 (PPAGAWYG) are CD81-binding 2. An N-linked (GlcNAc...) asparagine; by host glycan is attached at Asn557. 4 disulfide bridges follow: Cys565–Cys570, Cys579–Cys583, Cys595–Cys618, and Cys605–Cys642. Residues Asn621 and Asn643 are each glycosylated (N-linked (GlcNAc...) (high mannose) asparagine; by host). An intrachain disulfide couples Cys650 to Cys675. Positions 658–669 (IEMSPLLFSTTE) are PKR/eIF2-alpha phosphorylation homology domain (PePHD). Residues 724-744 (LADARICACLWMVLLISQVEA) traverse the membrane as a helical segment. At 745-755 (ALENLIVLNAA) the chain is on the lumenal side. The chain crosses the membrane as a helical span at residues 756–776 (SAASSQGWIYCLVFICCAWYI). At 777–780 (KGRV) the chain is on the cytoplasmic side. The chain crosses the membrane as a helical span at residues 781–801 (VPGATYAILHLWPLLLLVLAL). Over 802–811 (PQRAYAQDRE) the chain is Lumenal. The helical transmembrane segment at 812–832 (QGASIGVVVIAAITIFTLTPA) threads the bilayer. The Cytoplasmic segment spans residues 833–879 (YKTMLVHFLWWNQYFIARSEALIQQWVPSLRVRGGRDAVILLTCLLH). Residues 880 to 900 (PSLGFDITKMLLALLGPLYLL) traverse the membrane as a helical segment. At 901-926 (QVSLLRVPYYVRAHALLRVCILVRRV) the chain is on the lumenal side. Positions 901–1024 (QVSLLRVPYY…DMKSMGWRLL (124 aa)) constitute a Peptidase C18 domain. The interval 902 to 1204 (VSLLRVPYYV…PVENMETTMR (303 aa)) is protease NS2-3. Cys920 carries S-palmitoyl cysteine; by host lipidation. The chain crosses the membrane as a helical span at residues 927 to 947 (AGGKYIQAALLKLGAWTGTYI). The segment at 927–947 (AGGKYIQAALLKLGAWTGTYI) is interaction with host SCPS1. The Cytoplasmic portion of the chain corresponds to 948–1655 (YDHLAPLSTW…CMAADLEVIT (708 aa)). Catalysis depends on for protease NS2 activity; shared with dimeric partner residues His950, Glu970, and Cys991. The 182-residue stretch at 1025–1206 (APITAYCQQT…ENMETTMRSP (182 aa)) folds into the Peptidase S29 domain. Residues His1081 and Asp1105 each act as charge relay system; for serine protease NS3 activity in the active site. Zn(2+)-binding residues include Cys1121 and Cys1123. Ser1163 serves as the catalytic Charge relay system; for serine protease NS3 activity. The Zn(2+) site is built by Cys1169 and His1173. The Helicase ATP-binding domain occupies 1215–1367 (PAVPQTYQVG…PNITETALPS (153 aa)). 1228 to 1235 (APTGSGKS) contributes to the ATP binding site. Mg(2+)-binding residues include Ser1235 and Glu1315. A DECH box motif is present at residues 1314–1317 (DECH). The 163-residue stretch at 1374–1536 (YGKAIPLECI…ELTPSETTVR (163 aa)) folds into the Helicase C-terminal domain. An RNA-binding region spans residues 1484 to 1496 (QRRGRTGRGKPGV). Residues 1656–1676 (STWVLAGGIVAALAAYCLTVG) form a helical membrane-spanning segment. The interval 1677–1688 (SVVICGRIVTSG) is NS3-binding. The Cytoplasmic segment spans residues 1677-1803 (SVVICGRIVT…ALTSPLSTST (127 aa)). The helical transmembrane segment at 1804-1824 (TLLLNILGGWVASQLAPPTAS) threads the bilayer. Over 1825–1826 (TA) the chain is Lumenal. Residues 1827-1847 (FVVSGLAGAAVGSIGLGKVII) form a helical membrane-spanning segment. Position 1848 (Asp1848) is a topological domain, cytoplasmic. A helical transmembrane segment spans residues 1849–1869 (ILAGYGAGVSGALVAFKIMSG). The Lumenal segment spans residues 1870 to 1879 (EAPAVEDMVN). The chain crosses the membrane as a helical span at residues 1880 to 1900 (LLPALLSPGALVVGVVCAAVL). Residues 1901 to 1970 (RRHVGPSEGA…WISGDWSAPC (70 aa)) are Cytoplasmic-facing. Cys1970 carries the S-palmitoyl cysteine; by host lipid modification. An intramembrane segment occupies 1971 to 2000 (SCSWLKDVWDWVCTVLSDFKTWLRAKLVPT). At 2001–2992 (LPGIPFISCQ…FHSVSRARPR (992 aa)) the chain is on the cytoplasmic side. The Zn(2+) site is built by Cys2009, Cys2027, Cys2029, and Cys2050. The segment at 2118-2206 (EFFTEVDGVR…ASSSASQLSA (89 aa)) is FKBP8-binding. Residues 2118–2331 (EFFTEVDGVR…PVPPPRKKRV (214 aa)) are transcriptional activation. Residues 2133 to 2137 (PPCRP) are interaction with non-structural protein 4A. The interaction with host SKP2 stretch occupies residues 2187–2440 (RLARGSPPSL…ALITPCAAEE (254 aa)). Ser2192, Ser2195, Ser2199, Ser2202, Ser2205, and Ser2208 each carry phosphoserine; by host. Residues 2208–2247 (SLKATCTTAGKHPDAELIEANLLWRQEVGGNITRVESENK) are ISDR. The interaction with EIF2AK2/PKR stretch occupies residues 2208–2273 (SLKATCTTAG…REISVGAECF (66 aa)). The tract at residues 2247–2305 (KIIVLDSFDPLIAETDDREISVGAECFNPPRPKFPPALPVWARPDYNPPLLQPWKAPDY) is NS4B-binding. Residues 2298 to 2376 (QPWKAPDYEP…STLSSDMTPP (79 aa)) form a V3 region. The segment at 2316–2411 (PPKGLPPVPP…PDLSSGSWST (96 aa)) is disordered. The SH3-binding signature appears at 2321–2324 (PPVP). A Nuclear localization signal motif is present at residues 2326–2334 (PRKKRVVQL). A compositionally biased stretch (polar residues) spans 2347 to 2373 (AQTSFPPSTATLSEDSGRETSTLSSDM). Residues 2375–2385 (PPREEADRASD) show a composition bias toward basic and acidic residues. Position 2464 is a phosphoserine; by host (Ser2464). The RdRp catalytic domain maps to 2636-2754 (PMGFSYDTRC…ISESMGVAED (119 aa)). Residues Asp2642, Asp2740, and Asp2741 each coordinate Mg(2+). The helical transmembrane segment at 2993-3013 (NLLLCLLLLTVGVGIFLLPAR) threads the bilayer.

The protein belongs to the hepacivirus polyprotein family. Homooligomer. Interacts with E1 (via C-terminus). Interacts with the non-structural protein 5A. Interacts (via N-terminus) with host STAT1 (via SH2 domain); this interaction results in decreased STAT1 phosphorylation and ubiquitin-mediated proteasome-dependent STAT1 degradation, leading to decreased IFN-stimulated gene transcription. Interacts with host STAT3; this interaction constitutively activates STAT3. Interacts with host LTBR receptor. Interacts with host TNFRSF1A receptor and possibly induces apoptosis. Interacts with host HNRPK. Interacts with host YWHAE. Interacts with host UBE3A/E6AP. Interacts with host DDX3X. Interacts with host APOA2. Interacts with host RXRA protein. Interacts with host SP110 isoform 3/Sp110b; this interaction sequesters the transcriptional corepressor SP110 away from the nucleus. Interacts with host CREB3 nuclear transcription protein; this interaction triggers cell transformation. Interacts with host ACY3. Interacts with host C1QR1. Interacts with host RBM24; this interaction, which enhances the interaction of the mature core protein with 5'-UTR, may inhibit viral translation and favor replication. Interacts with host EIF2AK2/PKR; this interaction induces the autophosphorylation of EIF2AK2. Part of the viral assembly initiation complex composed of NS2, E1, E2, NS3, NS4A, NS5A and the mature core protein. In terms of assembly, forms a heterodimer with envelope glycoprotein E2. Interacts with mature core protein. Interacts with protease NS2. The heterodimer E1/E2 interacts with host CLDN1; this interaction plays a role in viral entry into host cell. Interacts with host SPSB2 (via C-terminus). Part of the viral assembly initiation complex composed of NS2, E1, E2, NS3, NS4A, NS5A and the mature core protein. Interacts with host NEURL3; this interaction prevents E1 binding to glycoprotein E2. As to quaternary structure, forms a heterodimer with envelope glycoprotein E1. Interacts with host CD81 and SCARB1 receptors; these interactions play a role in viral entry into host cell. Interacts with host EIF2AK2/PKR; this interaction inhibits EIF2AK2 and probably allows the virus to evade the innate immune response. Interacts with host CD209/DC-SIGN and CLEC4M/DC-SIGNR. Interact with host SPCS1; this interaction is essential for viral particle assembly. Interacts with protease NS2. The heterodimer E1/E2 interacts with host CLDN1; this interaction plays a role in viral entry into host cell. Part of the viral assembly initiation complex composed of NS2, E1, E2, NS3, NS4A, NS5A and the mature core protein. Interacts with host SLC3A2/4F2hc; the interaction may facilitate viral entry into host cell. Interacts with human PLSCR1. Homohexamer. Homoheptamer. Interacts with protease NS2. In terms of assembly, homodimer. Interacts with host SPCS1; this interaction is essential for viral particle assembly. Interacts with envelope glycoprotein E1. Interacts with envelope glycoprotein E2. Interacts with viroporin p7. Interacts with serine protease/helicase NS3. Part of the replication complex composed of NS2, NS3, NS4A, NS4B, NS5A and the RNA-directed RNA polymerase embedded in an ER-derived membranous web. Part of the viral assembly initiation complex composed of NS2, E1, E2, NS3, NS4A, NS5A and the mature core protein. As to quaternary structure, interacts with protease NS2. Interacts with non-structural protein 4A; this interaction stabilizes the folding of NS3 serine protease. NS3-NS4A interaction is essential for NS3 activation and allows membrane anchorage of the latter. NS3/NS4A complex also prevents phosphorylation of host IRF3, thus preventing the establishment of dsRNA induced antiviral state. Interacts with host MAVS; this interaction leads to the cleavage and inhibition of host MAVS. Interacts with host TICAM1; this interaction leads to the cleavage and inhibition of host TICAM1. Interacts with host TANK-binding kinase/TBK1; this interaction results in the inhibition of the association between TBK1 and IRF3, which leads to the inhibition of IRF3 activation. Interacts with host RBM24. Part of the replication complex composed of NS2, NS3, NS4A, NS4B, NS5A and the RNA-directed RNA polymerase embedded in an ER-derived membranous web. Part of the viral assembly initiation complex composed of NS2, E1, E2, NS3, NS4A, NS5A and the mature core protein. Interacts with NS3 serine protease; this interaction stabilizes the folding of NS3 serine protease. NS3-NS4A interaction is essential for NS3 activation and allows membrane anchorage of the latter. Interacts with non-structural protein 5A (via N-terminus). Part of the replication complex composed of NS2, NS3, NS4A, NS4B, NS5A and the RNA-directed RNA polymerase embedded in an ER-derived membranous web. Part of the viral assembly initiation complex composed of NS2, E1, E2, NS3, NS4A, NS5A and the mature core protein. In terms of assembly, homomultimer. Interacts with non-structural protein NS5A. Interacts with host PLA2G4C; this interaction likely initiates the recruitment of replication complexes to lipid droplets. Interacts with host STING; this interaction disrupts the interaction between STING and TBK1 thereby suppressing the interferon signaling. Part of the replication complex composed of NS2, NS3, NS4A, NS4B, NS5A and the RNA-directed RNA polymerase embedded in an ER-derived membranous web. As to quaternary structure, monomer. Homodimer; dimerization is required for RNA-binding. Interacts with the mature core protein. Interacts (via N-terminus) with non-structural protein 4A. Interacts with non-structural protein 4B. Interacts (via region D2) with RNA-directed RNA polymerase. Part of the viral assembly initiation complex composed of NS2, E1, E2, NS3, NS4A, NS5A and the mature core protein. Part of the replication complex composed of NS2, NS3, NS4A, NS4B, NS5A and the RNA-directed RNA polymerase embedded in an ER-derived membranous web. Interacts with host GRB2. Interacts with host BIN1. Interacts with host PIK3R1. Interacts with host SRCAP. Interacts with host FKBP8. Interacts (via C-terminus) with host VAPB (via MSP domain). Interacts with host EIF2AK2/PKR; this interaction leads to disruption of EIF2AK2 dimerization by NS5A and probably allows the virus to evade the innate immune response. Interacts (via N-terminus) with host PACSIN2 (via N-terminus); this interaction attenuates protein kinase C alpha-mediated phosphorylation of PACSIN2 by disrupting the interaction between PACSIN2 and PRKCA. Interacts (via N-terminus) with host SRC kinase (via SH2 domain). Interacts with most Src-family kinases. Interacts with host IFI27 and SKP2; promotes the ubiquitin-mediated proteasomal degradation of NS5A. Interacts with host GPS2. Interacts with host TNFRSF21; this interaction allows the modulation by the virus of JNK, p38 MAPK, STAT3, and Akt signaling pathways in a DR6-dependent manner. Interacts (via N-terminus) with host CIDEB (via N-terminus); this interaction seems to regulate the association of HCV particles with APOE. Interacts with host CHKA/Choline Kinase-alpha; CHKA bridges host PI4KA and NS5A and potentiates NS5A-stimulated PI4KA activity, which then facilitates the targeting of the ternary complex to the ER for viral replication. Interacts with host SPSB2 (via C-terminus); this interaction targets NS5A for ubiquitination and degradation. Interacts with host RAB18; this interaction may promote the association of NS5A and other replicase components with lipid droplets. Interacts (via region D2) with host PPIA/CYPA; the interaction stimulates RNA-binding ability of NS5A and is dependent on the peptidyl-prolyl cis-trans isomerase activity of PPIA/CYPA. Interacts with host TRIM14; this interaction induces the degradation of NS5A. Homooligomer. Interacts with non-structural protein 5A. Interacts with host VAPB. Interacts with host PRK2/PKN2. Interacts with host HNRNPA1 and SEPT6; these interactions facilitate viral replication. Part of the replication complex composed of NS2, NS3, NS4A, NS4B, NS5A and the RNA-directed RNA polymerase. Requires Zn(2+) as cofactor. The cofactor is Mg(2+). In terms of processing, specific enzymatic cleavages in vivo yield mature proteins. The structural proteins, core, E1, E2 and p7 are produced by proteolytic processing by host signal peptidases. The core protein precursor is synthesized as a 23 kDa, which is retained in the ER membrane through the hydrophobic signal peptide. Cleavage by the signal peptidase releases the 21 kDa mature core protein. The cleavage of the core protein precursor occurs between aminoacids 176 and 188 but the exact cleavage site is not known. Some degraded forms of the core protein appear as well during the course of infection. The other proteins (p7, NS2, NS3, NS4A, NS4B, NS5A and NS5B) are cleaved by the viral proteases. Autoprocessing between NS2 and NS3 is mediated by the NS2 cysteine protease catalytic domain and regulated by the NS3 N-terminal domain. Post-translationally, phosphorylated by host PKC and PKA. Ubiquitinated; mediated by UBE3A and leading to core protein subsequent proteasomal degradation. In terms of processing, highly N-glycosylated. Post-translationally, palmitoylation is required for NS2/3 autoprocessing and E2 recruitment to membranes. Palmitoylated. This modification may play a role in its polymerization or in protein-protein interactions. In terms of processing, phosphorylated on serines in a basal form termed p56. p58 is a hyperphosphorylated form of p56. p56 and p58 coexist in the cell in roughly equivalent amounts. Hyperphosphorylation is dependent on the presence of NS4A. Host CSNK1A1/CKI-alpha or RPS6KB1 kinases may be responsible for NS5A phosphorylation. Post-translationally, tyrosine phosphorylation is essential for the interaction with host SRC. The N-terminus is phosphorylated by host PRK2/PKN2.

Its subcellular location is the host endoplasmic reticulum membrane. The protein localises to the host mitochondrion membrane. It localises to the virion. It is found in the host cytoplasm. The protein resides in the host nucleus. Its subcellular location is the host lipid droplet. The protein localises to the virion membrane. It localises to the host mitochondrion. It is found in the host cell membrane. The protein resides in the host perinuclear region. It carries out the reaction Hydrolysis of four peptide bonds in the viral precursor polyprotein, commonly with Asp or Glu in the P6 position, Cys or Thr in P1 and Ser or Ala in P1'.. It catalyses the reaction a ribonucleoside 5'-triphosphate + H2O = a ribonucleoside 5'-diphosphate + phosphate + H(+). The enzyme catalyses ATP + H2O = ADP + phosphate + H(+). The catalysed reaction is RNA(n) + a ribonucleoside 5'-triphosphate = RNA(n+1) + diphosphate. Its activity is regulated as follows. Inhibited by the antiviral drug hexamethylene amiloride. Inhibition by amantadine appears to be genotype-dependent. Also inhibited by long-alkyl-chain iminosugar derivatives. With respect to regulation, activity is up-regulated by PRK2/PKN2-mediated phosphorylation. Packages viral RNA to form a viral nucleocapsid, and promotes virion budding. Participates in the viral particle production as a result of its interaction with the non-structural protein 5A. Binds RNA and may function as a RNA chaperone to induce the RNA structural rearrangements taking place during virus replication. Modulates viral translation initiation by interacting with viral IRES and 40S ribosomal subunit. Affects various cell signaling pathways, host immunity and lipid metabolism. Prevents the establishment of cellular antiviral state by blocking the interferon-alpha/beta (IFN-alpha/beta) and IFN-gamma signaling pathways and by blocking the formation of phosphorylated STAT1 and promoting ubiquitin-mediated proteasome-dependent degradation of STAT1. Activates STAT3 leading to cellular transformation. Regulates the activity of cellular genes, including c-myc and c-fos. May repress the promoter of p53, and sequester CREB3 and SP110 isoform 3/Sp110b in the cytoplasm. Represses cell cycle negative regulating factor CDKN1A, thereby interrupting an important check point of normal cell cycle regulation. Targets transcription factors involved in the regulation of inflammatory responses and in the immune response: suppresses TNF-induced NF-kappa-B activation, and activates AP-1. Binds to dendritic cells (DCs) via C1QR1, resulting in down-regulation of T-lymphocytes proliferation. Alters lipid metabolism by interacting with hepatocellular proteins involved in lipid accumulation and storage. Induces up-regulation of FAS promoter activity, and thereby contributes to the increased triglyceride accumulation in hepatocytes (steatosis). Functionally, forms a heterodimer with envelope glycoprotein E2, which mediates virus attachment to the host cell, virion internalization through clathrin-dependent endocytosis and fusion with host membrane. Fusion with the host cell is most likely mediated by both E1 and E2, through conformational rearrangements of the heterodimer required for fusion rather than a classical class II fusion mechanism. E1/E2 heterodimer binds host apolipoproteins such as APOB and ApoE thereby forming a lipo-viro-particle (LVP). APOE associated to the LVP allows the initial virus attachment to cell surface receptors such as the heparan sulfate proteoglycans (HSPGs), syndecan-1 (SDC1), syndecan-1 (SDC2), the low-density lipoprotein receptor (LDLR) and scavenger receptor class B type I (SCARB1). The cholesterol transfer activity of SCARB1 allows E2 exposure and binding of E2 to SCARB1 and the tetraspanin CD81. E1/E2 heterodimer binding on CD81 activates the epithelial growth factor receptor (EGFR) signaling pathway. Diffusion of the complex E1-E2-EGFR-SCARB1-CD81 to the cell lateral membrane allows further interaction with Claudin 1 (CLDN1) and occludin (OCLN) to finally trigger HCV entry. Its function is as follows. Forms a heterodimer with envelope glycoprotein E1, which mediates virus attachment to the host cell, virion internalization through clathrin-dependent endocytosis and fusion with host membrane. Fusion with the host cell is most likely mediated by both E1 and E2, through conformational rearrangements of the heterodimer required for fusion rather than a classical class II fusion mechanism. The interaction between envelope glycoprotein E2 and host apolipoprotein E/APOE allows the proper assembly, maturation and infectivity of the viral particles. This interaction is probably promoted via the up-regulation of cellular autophagy by the virus. E1/E2 heterodimer binds host apolipoproteins such as APOB and APOE thereby forming a lipo-viro-particle (LVP). APOE associated to the LVP allows the initial virus attachment to cell surface receptors such as the heparan sulfate proteoglycans (HSPGs), syndecan-1 (SDC1), syndecan-1 (SDC2), the low-density lipoprotein receptor (LDLR) and scavenger receptor class B type I (SCARB1). The cholesterol transfer activity of SCARB1 allows E2 exposure and binding of E2 to SCARB1 and the tetraspanin CD81. E1/E2 heterodimer binding on CD81 activates the epithelial growth factor receptor (EGFR) signaling pathway. Diffusion of the complex E1-E2-EGFR-SCARB1-CD81 to the cell lateral membrane allows further interaction with Claudin 1 (CLDN1) and occludin (OCLN) to finally trigger HCV entry. Inhibits host EIF2AK2/PKR activation, preventing the establishment of an antiviral state. Viral ligand for CD209/DC-SIGN and CLEC4M/DC-SIGNR, which are respectively found on dendritic cells (DCs), and on liver sinusoidal endothelial cells and macrophage-like cells of lymph node sinuses. These interactions allow the capture of circulating HCV particles by these cells and subsequent facilitated transmission to permissive cells such as hepatocytes and lymphocyte subpopulations. The interaction between E2 and host amino acid transporter complex formed by SLC3A2 and SLC7A5/LAT1 may facilitate viral entry into host cell. In terms of biological role, ion channel protein that acts as a viroporin and plays an essential role in the assembly, envelopment and secretion of viral particles. Regulates the host cell secretory pathway, which induces the intracellular retention of viral glycoproteins and favors assembly of viral particles. Creates a pore in acidic organelles and releases Ca(2+) and H(+) in the cytoplasm of infected cells, leading to a productive viral infection. High levels of cytoplasmic Ca(2+) may trigger membrane trafficking and transport of viral ER-associated proteins to viroplasms, sites of viral genome replication. This ionic imbalance induces the assembly of the inflammasome complex, which triggers the maturation of pro-IL-1beta into IL-1beta through the action of caspase-1. Targets also host mitochondria and induces mitochondrial depolarization. In addition of its role as a viroporin, acts as a lipid raft adhesion factor. Cysteine protease required for the proteolytic auto-cleavage between the non-structural proteins NS2 and NS3. The N-terminus of NS3 is required for the function of NS2 protease (active region NS2-3). Promotes the initiation of viral particle assembly by mediating the interaction between structural and non-structural proteins. Functionally, displays three enzymatic activities: serine protease with a chymotrypsin-like fold, NTPase and RNA helicase. NS3 serine protease, in association with NS4A, is responsible for the cleavages of NS3-NS4A, NS4A-NS4B, NS4B-NS5A and NS5A-NS5B. The NS3/NS4A complex prevents phosphorylation of host IRF3, thus preventing the establishment of dsRNA induced antiviral state. The NS3/NS4A complex induces host amino acid transporter component SLC3A2, thus contributing to HCV propagation. NS3 RNA helicase binds to RNA and unwinds both dsDNA and dsRNA in the 3' to 5' direction, and likely resolves RNA complicated stable secondary structures in the template strand. Binds a single ATP and catalyzes the unzipping of a single base pair of dsRNA. Inhibits host antiviral proteins TBK1 and IRF3 thereby preventing the establishment of an antiviral state. Cleaves host MAVS/CARDIF thereby preventing the establishment of an antiviral state. Cleaves host TICAM1/TRIF, thereby disrupting TLR3 signaling and preventing the establishment of an antiviral state. Its function is as follows. Peptide cofactor which forms a non-covalent complex with the N-terminal of NS3 serine protease. The NS3/NS4A complex prevents phosphorylation of host IRF3, thus preventing the establishment of dsRNA induced antiviral state. The NS3/NS4A complex induces host amino acid transporter component SLC3A2, thus contributing to HCV propagation. In terms of biological role, induces a specific membrane alteration that serves as a scaffold for the virus replication complex. This membrane alteration gives rise to the so-called ER-derived membranous web that contains the replication complex. NS4B self-interaction contributes to its function in membranous web formation. Promotes host TRIF protein degradation in a CASP8-dependent manner thereby inhibiting host TLR3-mediated interferon signaling. Disrupts the interaction between STING and TBK1 contributing to the inhibition of interferon signaling. Phosphorylated protein that is indispensable for viral replication and assembly. Both hypo- and hyperphosphorylated states are required for the viral life cycle. The hyperphosphorylated form of NS5A is an inhibitor of viral replication. Involved in RNA-binding and especially in binding to the viral genome. Zinc is essential for RNA-binding. Participates in the viral particle production as a result of its interaction with the mature viral core protein. Its interaction with host VAPB may target the viral replication complex to vesicles. Down-regulates viral IRES translation initiation. Mediates interferon resistance, presumably by interacting with and inhibiting host EIF2AK2/PKR. Prevents BIN1-induced apoptosis. Acts as a transcriptional activator of some host genes important for viral replication when localized in the nucleus. Via the interaction with host PACSIN2, modulates lipid droplet formation in order to promote virion assembly. Modulates TNFRSF21/DR6 signaling pathway for viral propagation. Functionally, RNA-dependent RNA polymerase that performs primer-template recognition and RNA synthesis during viral replication. Initiates RNA transcription/replication at a flavin adenine dinucleotide (FAD), resulting in a 5'- FAD cap on viral RNAs. In this way, recognition of viral 5' RNA by host pattern recognition receptors can be bypassed, thereby evading activation of antiviral pathways. This chain is Genome polyprotein, found in Hepatitis C virus genotype 6d (isolate VN235) (HCV).